The chain runs to 426 residues: Kynureninase (426 aa).

Pyridoxal 5'-phosphate is bound by residues Leu110, Ser111, 138 to 141, Asp223, His226, and Tyr248; that span reads FPSD. Lys249 is modified (N6-(pyridoxal phosphate)lysine). Pyridoxal 5'-phosphate-binding residues include Trp279 and Asn307.

It belongs to the kynureninase family. In terms of assembly, homodimer. The cofactor is pyridoxal 5'-phosphate.

The catalysed reaction is L-kynurenine + H2O = anthranilate + L-alanine + H(+). The enzyme catalyses 3-hydroxy-L-kynurenine + H2O = 3-hydroxyanthranilate + L-alanine + H(+). The protein operates within amino-acid degradation; L-kynurenine degradation; L-alanine and anthranilate from L-kynurenine: step 1/1. Its pathway is cofactor biosynthesis; NAD(+) biosynthesis; quinolinate from L-kynurenine: step 2/3. In terms of biological role, catalyzes the cleavage of L-kynurenine (L-Kyn) and L-3-hydroxykynurenine (L-3OHKyn) into anthranilic acid (AA) and 3-hydroxyanthranilic acid (3-OHAA), respectively. The chain is Kynureninase from Myxococcus xanthus (strain DK1622).